A 473-amino-acid polypeptide reads, in one-letter code: Glutathione reductase, mitochondrial (473 aa).

2 residues coordinate FAD: S30 and G31. S30 lines the glutathione pocket. R37 lines the glutathione pocket. Residues E50, T57, C58, and K66 each coordinate FAD. The cysteines at positions 58 and 63 are disulfide-linked. Glutathione is bound at residue Y114. A130 lines the FAD pocket. NADP(+)-binding residues include A190, I193, E196, R213, R219, and G279. D320 contributes to the FAD binding site. L326 lines the NADP(+) pocket. T328 contributes to the FAD binding site. Residue R336 participates in glutathione binding. Residue V359 participates in NADP(+) binding. An FAD-binding site is contributed by H456. Catalysis depends on H456, which acts as the Proton acceptor.

This sequence belongs to the class-I pyridine nucleotide-disulfide oxidoreductase family. It depends on FAD as a cofactor. Expressed at all larval stages and in adults in intestine, vulva muscle, pharynx and some cells in the tail.

The protein resides in the cytoplasm. Its subcellular location is the mitochondrion. The enzyme catalyses 2 glutathione + NADP(+) = glutathione disulfide + NADPH + H(+). Its function is as follows. Catalyzes the reduction of glutathione disulfide (GSSG) to reduced glutathione (GSH). Constitutes the major mechanism to maintain a high GSH:GSSG ratio in the cytosol. Involved in resistance to oxidative stress and starvation. Together with thioredoxin reductase txtr-1, required for the reduction of disulfide groups in the cuticle during molting. In Caenorhabditis elegans, this protein is Glutathione reductase, mitochondrial.